Reading from the N-terminus, the 538-residue chain is Phosphoenolpyruvate carboxykinase (ATP) (538 aa).

Positions 64, 206, and 212 each coordinate substrate. Residues lysine 212, histidine 231, and 247-255 (GLSGTGKTT) each bind ATP. Positions 212 and 231 each coordinate Mn(2+). Residue aspartate 268 participates in Mn(2+) binding. Residues glutamate 296, arginine 332, 448–449 (RI), and threonine 454 contribute to the ATP site. Arginine 332 is a substrate binding site.

Belongs to the phosphoenolpyruvate carboxykinase (ATP) family. Monomer. Requires Mn(2+) as cofactor.

Its subcellular location is the cytoplasm. It catalyses the reaction oxaloacetate + ATP = phosphoenolpyruvate + ADP + CO2. The protein operates within carbohydrate biosynthesis; gluconeogenesis. In terms of biological role, involved in the gluconeogenesis. Catalyzes the conversion of oxaloacetate (OAA) to phosphoenolpyruvate (PEP) through direct phosphoryl transfer between the nucleoside triphosphate and OAA. The chain is Phosphoenolpyruvate carboxykinase (ATP) from Enterobacter sp. (strain 638).